The sequence spans 422 residues: UDP-N-acetylglucosamine 1-carboxyvinyltransferase (422 aa).

22 to 23 (KN) is a binding site for phosphoenolpyruvate. UDP-N-acetyl-alpha-D-glucosamine is bound at residue R94. The Proton donor role is filled by C118. C118 is subject to 2-(S-cysteinyl)pyruvic acid O-phosphothioketal. Residues 123-127 (RPVDL), D309, and I331 each bind UDP-N-acetyl-alpha-D-glucosamine.

The protein belongs to the EPSP synthase family. MurA subfamily.

Its subcellular location is the cytoplasm. It carries out the reaction phosphoenolpyruvate + UDP-N-acetyl-alpha-D-glucosamine = UDP-N-acetyl-3-O-(1-carboxyvinyl)-alpha-D-glucosamine + phosphate. The protein operates within cell wall biogenesis; peptidoglycan biosynthesis. Functionally, cell wall formation. Adds enolpyruvyl to UDP-N-acetylglucosamine. In Cereibacter sphaeroides (strain ATCC 17025 / ATH 2.4.3) (Rhodobacter sphaeroides), this protein is UDP-N-acetylglucosamine 1-carboxyvinyltransferase.